The following is a 1414-amino-acid chain: Calcium-transporting ATPase 2 (1414 aa).

Disordered regions lie at residues 1 to 231 (MSRN…PSRL) and 265 to 294 (AVGTDEGNAENGAPRSSADMPGGNGPQWRA). Residues 1–327 (MSRNNPPPVI…LLMWLAFKDK (327 aa)) are Cytoplasmic-facing. Composition is skewed to low complexity over residues 33 to 53 (PTPTLVIPGSPASESSHPESP) and 75 to 96 (SPTPSYSSALTPPSPTLTSSSS). The span at 179–189 (DGDRGEDDANK) shows a compositional bias: basic and acidic residues. Basic residues predominate over residues 190 to 201 (KGKKDKKGKKGK). Residues 202–229 (KDKEEPPSAHLDPDKDKTDPTPFREKPS) are compositionally biased toward basic and acidic residues. A helical membrane pass occupies residues 328–348 (VLILLSVAAVVSLALGLYQDL). The Vacuolar segment spans residues 349–370 (GTPPKIIYNDECPDGCEEAQVD). Residues 371 to 391 (WVEGVAIVVAIIIVVLVGSIN) traverse the membrane as a helical segment. The Cytoplasmic portion of the chain corresponds to 392-541 (DWQKERQFKK…TPLQIKLNHL (150 aa)). The helical transmembrane segment at 542-562 (AELIAKLGGASGLLLFIALMI) threads the bilayer. Residues 563–585 (RFFVQLKTNPDRSANDKAQSFIQ) lie on the Vacuolar side of the membrane. The chain crosses the membrane as a helical span at residues 586-606 (ILIIAVTLVVVAVPEGLPLAV). Residues Val595 and Glu600 each contribute to the Ca(2+) site. At 607–1040 (TLALAFATKR…GRCVNDSVKK (434 aa)) the chain is on the cytoplasmic side. Residue Asp642 is the 4-aspartylphosphate intermediate of the active site. The Mg(2+) site is built by Asp642 and Thr644. ATP-binding positions include Thr644, Glu737, Arg779, 909 to 911 (TGD), Arg958, and Lys964. A Mg(2+)-binding site is contributed by Asp983. Asn986 is a binding site for ATP. The chain crosses the membrane as a helical span at residues 1041 to 1061 (FLQFQISVNITAVFITFISAV). A Ca(2+)-binding site is contributed by Asn1049. Residues 1062-1068 (ASSSEES) lie on the Vacuolar side of the membrane. A helical transmembrane segment spans residues 1069–1089 (VLTAVQLLWVNLIMDTFAALA). Ca(2+) contacts are provided by Asn1079 and Asp1083. Residues 1090-1118 (LATDPATESSLDRKPDRKNAPLITVEMFK) lie on the Cytoplasmic side of the membrane. The chain crosses the membrane as a helical span at residues 1119 to 1139 (MIMVQAIYQIIVCLVLHFAGL). Residues 1140–1153 (KILGLEDNDQNNTE) lie on the Vacuolar side of the membrane. Residues 1154–1171 (LGALVFNCFVFCQIFNQL) form a helical membrane-spanning segment. The Cytoplasmic segment spans residues 1172-1191 (NCRRLDRKLNVLEGFWRNWY). The chain crosses the membrane as a helical span at residues 1192–1212 (FIIIFLIMVGGQILIVEVGGA). Glu1208 contacts Ca(2+). Topologically, residues 1213–1223 (AFQVTRLGGRD) are vacuolar. The chain crosses the membrane as a helical span at residues 1224–1244 (WGITLVIGALSLPIGALVRLT). Residues 1245 to 1414 (PTGPFARLLV…GLSSGDANNV (170 aa)) lie on the Cytoplasmic side of the membrane. The segment at 1376–1414 (PRTNPDDPLYAKFGLQPPESRGSSVSGAEGLSSGDANNV) is disordered.

It belongs to the cation transport ATPase (P-type) (TC 3.A.3) family.

The protein resides in the vacuole membrane. The catalysed reaction is Ca(2+)(in) + ATP + H2O = Ca(2+)(out) + ADP + phosphate + H(+). Its function is as follows. This magnesium-dependent enzyme catalyzes the hydrolysis of ATP coupled with the transport of calcium. Transports calcium to the vacuole and participates in the control of cytosolic free calcium. This chain is Calcium-transporting ATPase 2, found in Cryptococcus neoformans var. grubii serotype A (strain H99 / ATCC 208821 / CBS 10515 / FGSC 9487) (Filobasidiella neoformans var. grubii).